A 602-amino-acid polypeptide reads, in one-letter code: Leucine-rich repeat-containing protein 40 (602 aa).

Ser71 carries the phosphoserine modification. 20 LRR repeats span residues 83 to 104, 106 to 127, 129 to 150, 152 to 173, 175 to 196, 198 to 219, 221 to 242, 244 to 265, 266 to 286, 290 to 311, 313 to 335, 336 to 356, 400 to 421, 426 to 447, 450 to 472, 473 to 494, 496 to 517, 519 to 540, 543 to 564, and 566 to 586; these read DLTK…LRLL, ALTV…IREL, NLQK…ITNL, NLKC…FEQL, NLED…FSSL, SLVR…INRM, RLKH…LAGM, SLEL…PSCS, LLKE…EHLK, SILV…IILL, SLER…GNLH, LKFL…IISK, TLKI…VFDA, IVTS…MVEL, MVSD…CVLQ, KLTF…MESL, RLQT…LYRI, TLET…KMKM, NLTT…LGNC, and NLRT…AILM.

This chain is Leucine-rich repeat-containing protein 40 (LRRC40), found in Homo sapiens (Human).